The following is a 248-amino-acid chain: tRNA (guanine-N(1)-)-methyltransferase (248 aa).

S-adenosyl-L-methionine contacts are provided by residues glycine 117 and 137-142 (IGDFVL).

It belongs to the RNA methyltransferase TrmD family. Homodimer.

Its subcellular location is the cytoplasm. The catalysed reaction is guanosine(37) in tRNA + S-adenosyl-L-methionine = N(1)-methylguanosine(37) in tRNA + S-adenosyl-L-homocysteine + H(+). Functionally, specifically methylates guanosine-37 in various tRNAs. The protein is tRNA (guanine-N(1)-)-methyltransferase of Polynucleobacter necessarius subsp. necessarius (strain STIR1).